Reading from the N-terminus, the 78-residue chain is Putative membrane protein insertion efficiency factor (78 aa).

The protein belongs to the UPF0161 family.

It is found in the cell inner membrane. Functionally, could be involved in insertion of integral membrane proteins into the membrane. The protein is Putative membrane protein insertion efficiency factor of Prochlorococcus marinus (strain MIT 9301).